We begin with the raw amino-acid sequence, 490 residues long: ATP synthase subunit beta, chloroplastic (490 aa).

ATP is bound at residue 170-177 (GGXGVGKT).

It belongs to the ATPase alpha/beta chains family. In terms of assembly, F-type ATPases have 2 components, CF(1) - the catalytic core - and CF(0) - the membrane proton channel. CF(1) has five subunits: alpha(3), beta(3), gamma(1), delta(1), epsilon(1). CF(0) has four main subunits: a(1), b(1), b'(1) and c(9-12).

The protein localises to the plastid. Its subcellular location is the chloroplast thylakoid membrane. The enzyme catalyses ATP + H2O + 4 H(+)(in) = ADP + phosphate + 5 H(+)(out). In terms of biological role, produces ATP from ADP in the presence of a proton gradient across the membrane. The catalytic sites are hosted primarily by the beta subunits. This chain is ATP synthase subunit beta, chloroplastic, found in Ipomoea coccinea (Scarlet morning-glory).